The following is a 388-amino-acid chain: Outer membrane protein assembly factor BamB (388 aa).

A signal peptide spans 1 to 17 (MVLSLLSVMLLSGYKFL).

Belongs to the BamB family. As to quaternary structure, part of the Bam complex, which is composed of the outer membrane protein BamA, and four lipoproteins BamB, BamC, BamD and BamE.

Its subcellular location is the cell outer membrane. Functionally, part of the outer membrane protein assembly complex, which is involved in assembly and insertion of beta-barrel proteins into the outer membrane. The sequence is that of Outer membrane protein assembly factor BamB from Moranella endobia (strain PCIT).